The primary structure comprises 126 residues: Holo-[acyl-carrier-protein] synthase (126 aa).

The Mg(2+) site is built by Asp-9 and Glu-58.

The protein belongs to the P-Pant transferase superfamily. AcpS family. It depends on Mg(2+) as a cofactor.

The protein resides in the cytoplasm. The enzyme catalyses apo-[ACP] + CoA = holo-[ACP] + adenosine 3',5'-bisphosphate + H(+). Functionally, transfers the 4'-phosphopantetheine moiety from coenzyme A to a Ser of acyl-carrier-protein. The sequence is that of Holo-[acyl-carrier-protein] synthase from Escherichia coli (strain ATCC 8739 / DSM 1576 / NBRC 3972 / NCIMB 8545 / WDCM 00012 / Crooks).